Here is a 91-residue protein sequence, read N- to C-terminus: UPF0250 protein Pfl01_4965 (91 aa).

Belongs to the UPF0250 family.

This chain is UPF0250 protein Pfl01_4965, found in Pseudomonas fluorescens (strain Pf0-1).